The chain runs to 453 residues: Protein FAM222A (453 aa).

This sequence belongs to the FAM222 family.

The chain is Protein FAM222A (Fam222a) from Mus musculus (Mouse).